The sequence spans 246 residues: MKKKNSIIFVFMILFFNSTVQSQSFKKNYFTERYTLYEKSNKELRKENFDNAISILEKIKKNNNTANISNDKIQIDLIYAYYKILNFDQARKNIEEFMYFYPNHPNIDYVVYIQCLISMSLDKNRFFSVFPINYYKNDYFYAKNAFFQLKYFIYQYPKSRYVVNAKKNLIYIKNRLSEHDLSILKFYFFHKEYIAVINRGEEMLQRYSETPSARKALIYIEKSYYALKIFDTAKKISKIILLNKIQ.

The first 22 residues, Met-1–Ser-22, serve as a signal peptide directing secretion.

This sequence belongs to the BamD family. In terms of assembly, part of the Bam complex.

Its subcellular location is the cell outer membrane. Part of the outer membrane protein assembly complex, which is involved in assembly and insertion of beta-barrel proteins into the outer membrane. The sequence is that of Outer membrane protein assembly factor BamD from Buchnera aphidicola subsp. Acyrthosiphon pisum (strain APS) (Acyrthosiphon pisum symbiotic bacterium).